A 122-amino-acid chain; its full sequence is Large ribosomal subunit protein uL14 (122 aa).

It belongs to the universal ribosomal protein uL14 family. In terms of assembly, part of the 50S ribosomal subunit. Forms a cluster with proteins L3 and L19. In the 70S ribosome, L14 and L19 interact and together make contacts with the 16S rRNA in bridges B5 and B8.

In terms of biological role, binds to 23S rRNA. Forms part of two intersubunit bridges in the 70S ribosome. The chain is Large ribosomal subunit protein uL14 from Desulfatibacillum aliphaticivorans.